A 445-amino-acid chain; its full sequence is Phosphoglucosamine mutase (445 aa).

Serine 102 acts as the Phosphoserine intermediate in catalysis. Positions 102, 241, 243, and 245 each coordinate Mg(2+). Position 102 is a phosphoserine (serine 102).

The protein belongs to the phosphohexose mutase family. The cofactor is Mg(2+). Post-translationally, activated by phosphorylation.

It carries out the reaction alpha-D-glucosamine 1-phosphate = D-glucosamine 6-phosphate. Its function is as follows. Catalyzes the conversion of glucosamine-6-phosphate to glucosamine-1-phosphate. This chain is Phosphoglucosamine mutase, found in Serratia proteamaculans (strain 568).